The primary structure comprises 533 residues: Trigger factor (533 aa).

Residues 164-249 form the PPIase FKBP-type domain; sequence GDQLIIDFTG…VKQVKVETDT (86 aa). The tract at residues 436–533 is disordered; it reads EAAIEAEAEE…APAKKPAAKK (98 aa). Residues 465-477 show a composition bias toward basic residues; it reads AAAKKAPAKKAPA. Residues 481–490 are compositionally biased toward basic and acidic residues; sequence AAKDGDEKPA. Composition is skewed to basic residues over residues 494–506 and 515–533; these read APAKKAPAKKAST and PAKKPAAKKAPAKKPAAKK.

This sequence belongs to the FKBP-type PPIase family. Tig subfamily.

It is found in the cytoplasm. It carries out the reaction [protein]-peptidylproline (omega=180) = [protein]-peptidylproline (omega=0). Involved in protein export. Acts as a chaperone by maintaining the newly synthesized protein in an open conformation. Functions as a peptidyl-prolyl cis-trans isomerase. This is Trigger factor from Erythrobacter litoralis (strain HTCC2594).